We begin with the raw amino-acid sequence, 190 residues long: Peptide methionine sulfoxide reductase A2-2 (190 aa).

A disordered region spans residues 1-20 (MSNDTGADGGAANPDLGPDA). The segment covering 10 to 20 (GAANPDLGPDA) has biased composition (low complexity).

Belongs to the MsrA Met sulfoxide reductase family.

It localises to the cytoplasm. The protein resides in the cytosol. The enzyme catalyses L-methionyl-[protein] + [thioredoxin]-disulfide + H2O = L-methionyl-(S)-S-oxide-[protein] + [thioredoxin]-dithiol. It carries out the reaction [thioredoxin]-disulfide + L-methionine + H2O = L-methionine (S)-S-oxide + [thioredoxin]-dithiol. Its function is as follows. Catalyzes the reduction of methionine sulfoxide (MetSO) to methionine in proteins. Plays a protective role against oxidative stress by restoring activity to proteins that have been inactivated by methionine oxidation. MSRA family specifically reduces the MetSO S-enantiomer. The chain is Peptide methionine sulfoxide reductase A2-2 (MSRA2-2) from Oryza sativa subsp. japonica (Rice).